The following is a 246-amino-acid chain: Uridylate kinase (246 aa).

20–23 serves as a coordination point for ATP; that stretch reads KISG. Positions 28–33 are involved in allosteric activation by GTP; sequence GDQGYG. G62 contributes to the UMP binding site. 2 residues coordinate ATP: G63 and R67. UMP is bound by residues D82 and 143–150; that span reads TGNPYFTT. Positions 170, 176, and 179 each coordinate ATP.

This sequence belongs to the UMP kinase family. Homohexamer.

Its subcellular location is the cytoplasm. The catalysed reaction is UMP + ATP = UDP + ADP. It functions in the pathway pyrimidine metabolism; CTP biosynthesis via de novo pathway; UDP from UMP (UMPK route): step 1/1. Allosterically activated by GTP. Inhibited by UTP. Functionally, catalyzes the reversible phosphorylation of UMP to UDP. This chain is Uridylate kinase, found in Cereibacter sphaeroides (strain ATCC 17029 / ATH 2.4.9) (Rhodobacter sphaeroides).